The sequence spans 360 residues: MKPSIVAKLEALQERHEEVQALLGDAGTLADQERFRALSREYAQLSDVSRCFLEWRQVQEDMETARLMLSDPEMRDMAQDELLEAKAKSEALEQELQLLLLPKDPDDERNAFVEVRAGTGGDEAALFAGDLFRMYSRYAESRRWRVEIMSASEGEHGGYKEVIAKISGEGVYGRLKFESGGHRVQRVPATESQGRIHTSACTVAVMPELPEAELPDINPADLRIDTFRSSGAGGQHVNTTDSAIRITHLPTGIVVECQDERSQHKNKAKALAVLGARIHAAEVAKRQQAEASTRRNLLGSGDRSDRNRTYNFPQGRVTDHRINLTLYRLDEVMEGKLDALIEPIIQEHQADQLAALAEQE.

At Gln235 the chain carries N5-methylglutamine. The disordered stretch occupies residues Arg286–Pro313.

Belongs to the prokaryotic/mitochondrial release factor family. Methylated by PrmC. Methylation increases the termination efficiency of RF1.

Its subcellular location is the cytoplasm. Its function is as follows. Peptide chain release factor 1 directs the termination of translation in response to the peptide chain termination codons UAG and UAA. The sequence is that of Peptide chain release factor 1 from Cronobacter sakazakii (strain ATCC BAA-894) (Enterobacter sakazakii).